Reading from the N-terminus, the 397-residue chain is tRNA(Met) cytidine acetate ligase (397 aa).

ATP-binding positions include 7–20, G101, N152, and R177; that span reads VTEYNPFHNGHIYH.

Belongs to the TmcAL family.

The protein localises to the cytoplasm. The enzyme catalyses cytidine(34) in elongator tRNA(Met) + acetate + ATP = N(4)-acetylcytidine(34) in elongator tRNA(Met) + AMP + diphosphate. Its function is as follows. Catalyzes the formation of N(4)-acetylcytidine (ac(4)C) at the wobble position of elongator tRNA(Met), using acetate and ATP as substrates. First activates an acetate ion to form acetyladenylate (Ac-AMP) and then transfers the acetyl group to tRNA to form ac(4)C34. The chain is tRNA(Met) cytidine acetate ligase from Leuconostoc citreum (strain KM20).